Here is a 441-residue protein sequence, read N- to C-terminus: Probable carboxypeptidase NFIA_052450 (441 aa).

An N-terminal signal peptide occupies residues 1–16; sequence MKPLSSLLLSAALSAA. N-linked (GlcNAc...) asparagine glycans are attached at residues asparagine 88 and asparagine 150. Aspartate 166 lines the Zn(2+) pocket. Residue glutamate 198 is the Proton acceptor of the active site. Glutamate 199 provides a ligand contact to Zn(2+). N-linked (GlcNAc...) asparagine glycans are attached at residues asparagine 354 and asparagine 373.

This sequence belongs to the peptidase M20A family. Zn(2+) is required as a cofactor.

It localises to the secreted. This chain is Probable carboxypeptidase NFIA_052450, found in Neosartorya fischeri (strain ATCC 1020 / DSM 3700 / CBS 544.65 / FGSC A1164 / JCM 1740 / NRRL 181 / WB 181) (Aspergillus fischerianus).